The chain runs to 170 residues: NADH-quinone oxidoreductase subunit B (170 aa).

Residues Cys37, Cys38, Cys102, and Cys131 each contribute to the [4Fe-4S] cluster site.

Belongs to the complex I 20 kDa subunit family. As to quaternary structure, NDH-1 is composed of 14 different subunits. Subunits NuoB, C, D, E, F, and G constitute the peripheral sector of the complex. [4Fe-4S] cluster is required as a cofactor.

It is found in the cell inner membrane. It carries out the reaction a quinone + NADH + 5 H(+)(in) = a quinol + NAD(+) + 4 H(+)(out). Its function is as follows. NDH-1 shuttles electrons from NADH, via FMN and iron-sulfur (Fe-S) centers, to quinones in the respiratory chain. The immediate electron acceptor for the enzyme in this species is believed to be ubiquinone. Couples the redox reaction to proton translocation (for every two electrons transferred, four hydrogen ions are translocated across the cytoplasmic membrane), and thus conserves the redox energy in a proton gradient. This Geobacter sulfurreducens (strain ATCC 51573 / DSM 12127 / PCA) protein is NADH-quinone oxidoreductase subunit B.